We begin with the raw amino-acid sequence, 718 residues long: Effector protein hopM1 (718 aa).

Residues 1 to 10 are compositionally biased toward gly residues; the sequence is MIGTRVGGSG. 2 disordered regions span residues 1–63 and 683–718; these read MIGT…ARLP and GVSSLRDAHKPAETSSPTADDAAAVELTAMEEGRRR. The segment covering 11-22 has biased composition (polar residues); that stretch reads STEIVQANQPQP. Over residues 44–60 the composition is skewed to low complexity; sequence ASQSAAQAPESSAAGAA.

As to quaternary structure, interacts with the chaperone ShcM.

Its subcellular location is the secreted. It is found in the host membrane. Involved in the suppression of basal resistance and promotion of disease symptoms in plants. May be involved in the inhibition of a host vesicle trafficking pathway. The protein is Effector protein hopM1 (hopM1) of Pseudomonas syringae pv. syringae (strain B728a).